We begin with the raw amino-acid sequence, 421 residues long: Putative aspartate aminotransferase, cytoplasmic 2 (421 aa).

The residue at position 249 (Lys-249) is an N6-(pyridoxal phosphate)lysine.

It belongs to the class-I pyridoxal-phosphate-dependent aminotransferase family. Homodimer. Pyridoxal 5'-phosphate serves as cofactor.

The protein localises to the cytoplasm. It carries out the reaction L-aspartate + 2-oxoglutarate = oxaloacetate + L-glutamate. The sequence is that of Putative aspartate aminotransferase, cytoplasmic 2 (GOT1L1) from Homo sapiens (Human).